Reading from the N-terminus, the 878-residue chain is uncharacterized protein (878 aa).

Disordered stretches follow at residues isoleucine 58–phenylalanine 223, lysine 306–arginine 494, lysine 585–leucine 652, and proline 679–glycine 709. 3 stretches are compositionally biased toward low complexity: residues asparagine 64–serine 213, serine 314–serine 325, and isoleucine 335–asparagine 355. The segment covering arginine 362–valine 372 has biased composition (polar residues). The span at asparagine 373 to arginine 494 shows a compositional bias: low complexity. The span at lysine 585–glutamine 595 shows a compositional bias: basic and acidic residues. Positions lysine 596–glutamine 605 are enriched in low complexity. Residues threonine 615–glutamate 624 show a composition bias toward acidic residues. Composition is skewed to low complexity over residues asparagine 639–leucine 652 and proline 679–serine 704.

This is an uncharacterized protein from Dictyostelium discoideum (Social amoeba).